The chain runs to 307 residues: Acetyl-coenzyme A carboxylase carboxyl transferase subunit beta (307 aa).

Positions 28 to 297 (LWVKCPDTGQ…TPQPGTAPEP (270 aa)) constitute a CoA carboxyltransferase N-terminal domain. The segment at 286–307 (RRTPQPGTAPEPTTPEPLPNAA) is disordered. Positions 292–307 (GTAPEPTTPEPLPNAA) are enriched in pro residues.

It belongs to the AccD/PCCB family. As to quaternary structure, acetyl-CoA carboxylase is a heterohexamer composed of biotin carboxyl carrier protein (AccB), biotin carboxylase (AccC) and two subunits each of ACCase subunit alpha (AccA) and ACCase subunit beta (AccD).

The protein localises to the cytoplasm. The catalysed reaction is N(6)-carboxybiotinyl-L-lysyl-[protein] + acetyl-CoA = N(6)-biotinyl-L-lysyl-[protein] + malonyl-CoA. It participates in lipid metabolism; malonyl-CoA biosynthesis; malonyl-CoA from acetyl-CoA: step 1/1. Component of the acetyl coenzyme A carboxylase (ACC) complex. Biotin carboxylase (BC) catalyzes the carboxylation of biotin on its carrier protein (BCCP) and then the CO(2) group is transferred by the transcarboxylase to acetyl-CoA to form malonyl-CoA. The sequence is that of Acetyl-coenzyme A carboxylase carboxyl transferase subunit beta from Methylorubrum extorquens (strain CM4 / NCIMB 13688) (Methylobacterium extorquens).